A 420-amino-acid chain; its full sequence is UDP-N-acetylglucosamine 1-carboxyvinyltransferase 1 (420 aa).

Position 22 to 23 (22 to 23 (KN)) interacts with phosphoenolpyruvate. A UDP-N-acetyl-alpha-D-glucosamine-binding site is contributed by Arg-91. The active-site Proton donor is the Cys-115. Cys-115 is subject to 2-(S-cysteinyl)pyruvic acid O-phosphothioketal. Residues 120–124 (RPMDL), Asp-303, and Val-325 each bind UDP-N-acetyl-alpha-D-glucosamine.

It belongs to the EPSP synthase family. MurA subfamily.

It is found in the cytoplasm. It catalyses the reaction phosphoenolpyruvate + UDP-N-acetyl-alpha-D-glucosamine = UDP-N-acetyl-3-O-(1-carboxyvinyl)-alpha-D-glucosamine + phosphate. It participates in cell wall biogenesis; peptidoglycan biosynthesis. Functionally, cell wall formation. Adds enolpyruvyl to UDP-N-acetylglucosamine. This chain is UDP-N-acetylglucosamine 1-carboxyvinyltransferase 1, found in Carboxydothermus hydrogenoformans (strain ATCC BAA-161 / DSM 6008 / Z-2901).